Consider the following 320-residue polypeptide: Cytochrome f (320 aa).

The signal sequence occupies residues methionine 1–alanine 35. Heme is bound by residues tyrosine 36, cysteine 56, cysteine 59, and histidine 60. The helical transmembrane segment at valine 286–lysine 306 threads the bilayer.

It belongs to the cytochrome f family. In terms of assembly, the 4 large subunits of the cytochrome b6-f complex are cytochrome b6, subunit IV (17 kDa polypeptide, petD), cytochrome f and the Rieske protein, while the 4 small subunits are PetG, PetL, PetM and PetN. The complex functions as a dimer. Heme serves as cofactor.

Its subcellular location is the plastid. The protein localises to the chloroplast thylakoid membrane. Its function is as follows. Component of the cytochrome b6-f complex, which mediates electron transfer between photosystem II (PSII) and photosystem I (PSI), cyclic electron flow around PSI, and state transitions. This chain is Cytochrome f, found in Draba nemorosa (Woodland whitlowgrass).